A 650-amino-acid polypeptide reads, in one-letter code: ATP-binding cassette sub-family G member 3 (650 aa).

The Cytoplasmic portion of the chain corresponds to 1 to 387 (MASNNDPTVI…KNFKGFPWVT (387 aa)). The region spanning 37-279 (LSFHNISYQE…FRSAGYNYES (243 aa)) is the ABC transporter domain. Residues 381–644 (KGFPWVTVIQ…TITYVQLLQV (264 aa)) enclose the ABC transmembrane type-2 domain. A helical membrane pass occupies residues 388–408 (VIQAIITVILATAVGTAFRVL). At 409-420 (KNDCIEVQMRAG) the chain is on the extracellular side. A helical membrane pass occupies residues 421 to 441 (LLYLLTIFQCITSVSAGELFV). The Cytoplasmic portion of the chain corresponds to 442 to 469 (IDRVRFLHEHTSGYYRVSSYFFGKLLAE). A helical transmembrane segment spans residues 470–490 (LIPRRLLPSTVFSLITYVIAG). Over 491-498 (VKMSMKCF) the chain is Extracellular. The chain crosses the membrane as a helical span at residues 499-519 (FTMICTIMVLAYSASSLPLSI). Topologically, residues 520 to 527 (GAGENAVA) are cytoplasmic. Residues 528–548 (VPTLLVTIYFVFMLFFSGLSL) traverse the membrane as a helical segment. Topologically, residues 549–623 (YSGSFLPKLS…LSSWGFWENH (75 aa)) are extracellular. The helical transmembrane segment at 624 to 644 (LALVCTMIILLTITYVQLLQV) threads the bilayer. Topologically, residues 645 to 648 (KNIR) are cytoplasmic.

It belongs to the ABC transporter superfamily. ABCG family. Eye pigment precursor importer (TC 3.A.1.204) subfamily. In terms of assembly, may dimerize with another subunit to form a functional transporter. In terms of tissue distribution, highest levels of expression in thymus and spleen. Detected in lung and small intestine.

It localises to the membrane. This is ATP-binding cassette sub-family G member 3 (Abcg3) from Mus musculus (Mouse).